Reading from the N-terminus, the 306-residue chain is UDP-3-O-acyl-N-acetylglucosamine deacetylase (306 aa).

The Zn(2+) site is built by His-79, His-238, and Asp-242. His-265 functions as the Proton donor in the catalytic mechanism.

It belongs to the LpxC family. It depends on Zn(2+) as a cofactor.

The enzyme catalyses a UDP-3-O-[(3R)-3-hydroxyacyl]-N-acetyl-alpha-D-glucosamine + H2O = a UDP-3-O-[(3R)-3-hydroxyacyl]-alpha-D-glucosamine + acetate. It functions in the pathway glycolipid biosynthesis; lipid IV(A) biosynthesis; lipid IV(A) from (3R)-3-hydroxytetradecanoyl-[acyl-carrier-protein] and UDP-N-acetyl-alpha-D-glucosamine: step 2/6. Functionally, catalyzes the hydrolysis of UDP-3-O-myristoyl-N-acetylglucosamine to form UDP-3-O-myristoylglucosamine and acetate, the committed step in lipid A biosynthesis. This is UDP-3-O-acyl-N-acetylglucosamine deacetylase from Shewanella sp. (strain ANA-3).